The sequence spans 386 residues: Succinate--CoA ligase [ADP-forming] subunit beta (386 aa).

The 236-residue stretch at 9 to 244 (KDLLASYDVP…PSQENVRDVL (236 aa)) folds into the ATP-grasp domain. Residues lysine 46, 53 to 55 (GRG), valine 102, and glutamate 107 contribute to the ATP site. Mg(2+)-binding residues include asparagine 199 and aspartate 213. Residues asparagine 264 and 321–323 (GIM) each bind substrate.

It belongs to the succinate/malate CoA ligase beta subunit family. In terms of assembly, heterotetramer of two alpha and two beta subunits. Requires Mg(2+) as cofactor.

It catalyses the reaction succinate + ATP + CoA = succinyl-CoA + ADP + phosphate. The catalysed reaction is GTP + succinate + CoA = succinyl-CoA + GDP + phosphate. It functions in the pathway carbohydrate metabolism; tricarboxylic acid cycle; succinate from succinyl-CoA (ligase route): step 1/1. Succinyl-CoA synthetase functions in the citric acid cycle (TCA), coupling the hydrolysis of succinyl-CoA to the synthesis of either ATP or GTP and thus represents the only step of substrate-level phosphorylation in the TCA. The beta subunit provides nucleotide specificity of the enzyme and binds the substrate succinate, while the binding sites for coenzyme A and phosphate are found in the alpha subunit. This is Succinate--CoA ligase [ADP-forming] subunit beta from Chlamydia pneumoniae (Chlamydophila pneumoniae).